Consider the following 302-residue polypeptide: 4-hydroxy-tetrahydrodipicolinate synthase (302 aa).

Position 49 (T49) interacts with pyruvate. Y137 (proton donor/acceptor) is an active-site residue. Catalysis depends on K166, which acts as the Schiff-base intermediate with substrate. Position 208 (I208) interacts with pyruvate.

This sequence belongs to the DapA family. As to quaternary structure, homotetramer; dimer of dimers.

It localises to the cytoplasm. It carries out the reaction L-aspartate 4-semialdehyde + pyruvate = (2S,4S)-4-hydroxy-2,3,4,5-tetrahydrodipicolinate + H2O + H(+). The protein operates within amino-acid biosynthesis; L-lysine biosynthesis via DAP pathway; (S)-tetrahydrodipicolinate from L-aspartate: step 3/4. Its function is as follows. Catalyzes the condensation of (S)-aspartate-beta-semialdehyde [(S)-ASA] and pyruvate to 4-hydroxy-tetrahydrodipicolinate (HTPA). The chain is 4-hydroxy-tetrahydrodipicolinate synthase from Chloroherpeton thalassium (strain ATCC 35110 / GB-78).